The sequence spans 323 residues: HPr kinase/phosphorylase (323 aa).

Residues His146 and Lys167 contribute to the active site. Position 161–168 (161–168 (GESGLGKS)) interacts with ATP. Residue Ser168 participates in Mg(2+) binding. The active-site Proton acceptor; for phosphorylation activity. Proton donor; for dephosphorylation activity is Asp185. Residues 209 to 218 (LEVRGLGLLD) form an important for the catalytic mechanism of both phosphorylation and dephosphorylation region. Glu210 lines the Mg(2+) pocket. The active site involves Arg250. The tract at residues 271-276 (QVAAGR) is important for the catalytic mechanism of dephosphorylation.

The protein belongs to the HPrK/P family. In terms of assembly, homohexamer. It depends on Mg(2+) as a cofactor.

The catalysed reaction is [HPr protein]-L-serine + ATP = [HPr protein]-O-phospho-L-serine + ADP + H(+). It catalyses the reaction [HPr protein]-O-phospho-L-serine + phosphate + H(+) = [HPr protein]-L-serine + diphosphate. Catalyzes the ATP- as well as the pyrophosphate-dependent phosphorylation of a specific serine residue in HPr, a phosphocarrier protein of the phosphoenolpyruvate-dependent sugar phosphotransferase system (PTS). HprK/P also catalyzes the pyrophosphate-producing, inorganic phosphate-dependent dephosphorylation (phosphorolysis) of seryl-phosphorylated HPr (P-Ser-HPr). The sequence is that of HPr kinase/phosphorylase from Cupriavidus metallidurans (strain ATCC 43123 / DSM 2839 / NBRC 102507 / CH34) (Ralstonia metallidurans).